The chain runs to 101 residues: Small ribosomal subunit protein uS14 (101 aa).

The disordered stretch occupies residues 1–24 (MAKVSSIKKNEKRKKLSQSLHNKR). Over residues 10–24 (NEKRKKLSQSLHNKR) the composition is skewed to basic residues.

Belongs to the universal ribosomal protein uS14 family. As to quaternary structure, part of the 30S ribosomal subunit. Contacts proteins S3 and S10.

Functionally, binds 16S rRNA, required for the assembly of 30S particles and may also be responsible for determining the conformation of the 16S rRNA at the A site. This Rickettsia bellii (strain OSU 85-389) protein is Small ribosomal subunit protein uS14.